Reading from the N-terminus, the 278-residue chain is 4-deoxy-L-threo-5-hexosulose-uronate ketol-isomerase (278 aa).

Residues H196, H198, E203, and H245 each coordinate Zn(2+).

Belongs to the KduI family. Zn(2+) is required as a cofactor.

It catalyses the reaction 5-dehydro-4-deoxy-D-glucuronate = 3-deoxy-D-glycero-2,5-hexodiulosonate. It functions in the pathway glycan metabolism; pectin degradation; 2-dehydro-3-deoxy-D-gluconate from pectin: step 4/5. In terms of biological role, catalyzes the isomerization of 5-dehydro-4-deoxy-D-glucuronate to 3-deoxy-D-glycero-2,5-hexodiulosonate. The polypeptide is 4-deoxy-L-threo-5-hexosulose-uronate ketol-isomerase (Shigella flexneri).